Here is a 286-residue protein sequence, read N- to C-terminus: Formamidopyrimidine-DNA glycosylase (286 aa).

Residue proline 2 is the Schiff-base intermediate with DNA of the active site. The Proton donor role is filled by glutamate 3. Lysine 61 (proton donor; for beta-elimination activity) is an active-site residue. 3 residues coordinate DNA: histidine 96, arginine 117, and lysine 160. Residues aspartate 246–arginine 280 form an FPG-type zinc finger. Catalysis depends on arginine 270, which acts as the Proton donor; for delta-elimination activity.

It belongs to the FPG family. Monomer. Requires Zn(2+) as cofactor.

It carries out the reaction Hydrolysis of DNA containing ring-opened 7-methylguanine residues, releasing 2,6-diamino-4-hydroxy-5-(N-methyl)formamidopyrimidine.. It catalyses the reaction 2'-deoxyribonucleotide-(2'-deoxyribose 5'-phosphate)-2'-deoxyribonucleotide-DNA = a 3'-end 2'-deoxyribonucleotide-(2,3-dehydro-2,3-deoxyribose 5'-phosphate)-DNA + a 5'-end 5'-phospho-2'-deoxyribonucleoside-DNA + H(+). Its function is as follows. Involved in base excision repair of DNA damaged by oxidation or by mutagenic agents. Acts as a DNA glycosylase that recognizes and removes damaged bases. Has a preference for oxidized purines, such as 7,8-dihydro-8-oxoguanine (8-oxoG). Has AP (apurinic/apyrimidinic) lyase activity and introduces nicks in the DNA strand. Cleaves the DNA backbone by beta-delta elimination to generate a single-strand break at the site of the removed base with both 3'- and 5'-phosphates. The protein is Formamidopyrimidine-DNA glycosylase of Streptomyces avermitilis (strain ATCC 31267 / DSM 46492 / JCM 5070 / NBRC 14893 / NCIMB 12804 / NRRL 8165 / MA-4680).